The sequence spans 241 residues: MNLLSSFPPPADGVRRLQPGTEAVVGGRGLGPGTLYIAESRLSWLNGSGLGFSLEYPSISLHAISRDTAAYPEEHLYVMVNSKLADKEDKEAHMADQEEEESEDDDDDEEPITEIRFVPGEKSDLGEMFSAMCDCQALHPDPEDADSDDDYEGDEYDVEAHEQGQVDVPTFYTYEEGLSHLTTEGQATLERLENMLSNSIGNQHTMAGVRTEGPALEPEDGMDVENTQTVAGQFEDADVDH.

The interval 88 to 112 (EDKEAHMADQEEEESEDDDDDEEPI) is disordered. Residues 97-112 (QEEEESEDDDDDEEPI) are compositionally biased toward acidic residues.

Belongs to the pICln (TC 1.A.47) family. As to quaternary structure, component of the methylosome, a 20S complex containing at least clns1a/picln, prmt5/skb1 and wdr77/mep50; may mediate snrpd1 and snrpd3 methylation. Forms a 6S pICln-Sm complex composed of clns1a/picln, snrpd1, snrpd2, snrpe, snrpf and snrpg; ring-like structure where clns1a/pICln mimics additional Sm proteins and which is unable to assemble into the core snRNP.

The protein resides in the cytoplasm. It is found in the cytosol. Its subcellular location is the nucleus. It localises to the cytoskeleton. Its function is as follows. Involved in both the assembly of spliceosomal snRNPs and the methylation of Sm proteins. Chaperone that regulates the assembly of spliceosomal U1, U2, U4 and U5 small nuclear ribonucleoproteins (snRNPs), the building blocks of the spliceosome, and thereby plays an important role in the splicing of cellular pre-mRNAs. Most spliceosomal snRNPs contain a common set of Sm proteins SNRPB, SNRPD1, SNRPD2, SNRPD3, SNRPE, SNRPF and SNRPG that assemble in a heptameric protein ring on the Sm site of the small nuclear RNA to form the core snRNP (Sm core). In the cytosol, the Sm proteins SNRPD1, SNRPD2, SNRPE, SNRPF and SNRPG are trapped in an inactive 6S pICln-Sm complex by the chaperone CLNS1A that controls the assembly of the core snRNP. Dissociation by the SMN complex of CLNS1A from the trapped Sm proteins and their transfer to an SMN-Sm complex triggers the assembly of core snRNPs and their transport to the nucleus. In Xenopus laevis (African clawed frog), this protein is Methylosome subunit pICln (clns1a).